We begin with the raw amino-acid sequence, 416 residues long: Serine hydroxymethyltransferase (416 aa).

(6S)-5,6,7,8-tetrahydrofolate contacts are provided by residues Leu-119 and 123–125 (GHL). Lys-228 is modified (N6-(pyridoxal phosphate)lysine). Glu-243 contacts (6S)-5,6,7,8-tetrahydrofolate.

The protein belongs to the SHMT family. Homodimer. It depends on pyridoxal 5'-phosphate as a cofactor.

It is found in the cytoplasm. The catalysed reaction is (6R)-5,10-methylene-5,6,7,8-tetrahydrofolate + glycine + H2O = (6S)-5,6,7,8-tetrahydrofolate + L-serine. It functions in the pathway one-carbon metabolism; tetrahydrofolate interconversion. It participates in amino-acid biosynthesis; glycine biosynthesis; glycine from L-serine: step 1/1. In terms of biological role, catalyzes the reversible interconversion of serine and glycine with tetrahydrofolate (THF) serving as the one-carbon carrier. This reaction serves as the major source of one-carbon groups required for the biosynthesis of purines, thymidylate, methionine, and other important biomolecules. Also exhibits THF-independent aldolase activity toward beta-hydroxyamino acids, producing glycine and aldehydes, via a retro-aldol mechanism. This Desulforapulum autotrophicum (strain ATCC 43914 / DSM 3382 / VKM B-1955 / HRM2) (Desulfobacterium autotrophicum) protein is Serine hydroxymethyltransferase.